The sequence spans 517 residues: 2-isopropylmalate synthase (517 aa).

Residues 5-268 (IIIFDTTLRD…DTRINTQEIH (264 aa)) form the Pyruvate carboxyltransferase domain. Positions 14, 202, 204, and 238 each coordinate Mn(2+). The tract at residues 393 to 517 (SLDVITSQTI…ADLKSHKISQ (125 aa)) is regulatory domain.

This sequence belongs to the alpha-IPM synthase/homocitrate synthase family. LeuA type 1 subfamily. As to quaternary structure, homodimer. Requires Mn(2+) as cofactor.

The protein resides in the cytoplasm. The enzyme catalyses 3-methyl-2-oxobutanoate + acetyl-CoA + H2O = (2S)-2-isopropylmalate + CoA + H(+). Its pathway is amino-acid biosynthesis; L-leucine biosynthesis; L-leucine from 3-methyl-2-oxobutanoate: step 1/4. In terms of biological role, catalyzes the condensation of the acetyl group of acetyl-CoA with 3-methyl-2-oxobutanoate (2-ketoisovalerate) to form 3-carboxy-3-hydroxy-4-methylpentanoate (2-isopropylmalate). The chain is 2-isopropylmalate synthase from Histophilus somni (strain 129Pt) (Haemophilus somnus).